Consider the following 310-residue polypeptide: D-apiose import binding protein (310 aa).

The first 21 residues, 1 to 21, serve as a signal peptide directing secretion; it reads MKLLKASLVALSLAASTFVYA. D-apiofuranose contacts are provided by residues Asn35, 111-112, 158-160, Arg164, Asn214, Asp239, and Gln260; these read DR and DTN.

This sequence belongs to the bacterial solute-binding protein 2 family.

The protein localises to the periplasm. Functionally, part of an ABC transporter complex involved in D-apiose import. Binds D-apiose, D-ribose and D-ribulose. The polypeptide is D-apiose import binding protein (Actinobacillus succinogenes (strain ATCC 55618 / DSM 22257 / CCUG 43843 / 130Z)).